The sequence spans 215 residues: Ribosomal RNA small subunit methyltransferase G (215 aa).

Residues glycine 77, phenylalanine 82, 130-131, and arginine 146 contribute to the S-adenosyl-L-methionine site; that span reads IE.

The protein belongs to the methyltransferase superfamily. RNA methyltransferase RsmG family.

It localises to the cytoplasm. It carries out the reaction guanosine(527) in 16S rRNA + S-adenosyl-L-methionine = N(7)-methylguanosine(527) in 16S rRNA + S-adenosyl-L-homocysteine. Functionally, specifically methylates the N7 position of guanine in position 527 of 16S rRNA. The chain is Ribosomal RNA small subunit methyltransferase G from Bartonella henselae (strain ATCC 49882 / DSM 28221 / CCUG 30454 / Houston 1) (Rochalimaea henselae).